A 388-amino-acid chain; its full sequence is Formate-dependent phosphoribosylglycinamide formyltransferase (388 aa).

N(1)-(5-phospho-beta-D-ribosyl)glycinamide-binding positions include 15 to 16 (EL) and glutamate 75. ATP contacts are provided by residues arginine 107, lysine 148, 153 to 158 (SSGKGQ), 188 to 191 (EEFL), and glutamate 196. The region spanning 112–302 (DLAAGELALR…EFELHLRAVL (191 aa)) is the ATP-grasp domain. The Mg(2+) site is built by glutamate 261 and glutamate 273. Residues aspartate 280, lysine 350, and 357 to 358 (RR) each bind N(1)-(5-phospho-beta-D-ribosyl)glycinamide.

Belongs to the PurK/PurT family. In terms of assembly, homodimer.

It catalyses the reaction N(1)-(5-phospho-beta-D-ribosyl)glycinamide + formate + ATP = N(2)-formyl-N(1)-(5-phospho-beta-D-ribosyl)glycinamide + ADP + phosphate + H(+). The protein operates within purine metabolism; IMP biosynthesis via de novo pathway; N(2)-formyl-N(1)-(5-phospho-D-ribosyl)glycinamide from N(1)-(5-phospho-D-ribosyl)glycinamide (formate route): step 1/1. Involved in the de novo purine biosynthesis. Catalyzes the transfer of formate to 5-phospho-ribosyl-glycinamide (GAR), producing 5-phospho-ribosyl-N-formylglycinamide (FGAR). Formate is provided by PurU via hydrolysis of 10-formyl-tetrahydrofolate. This chain is Formate-dependent phosphoribosylglycinamide formyltransferase, found in Parasynechococcus marenigrum (strain WH8102).